We begin with the raw amino-acid sequence, 631 residues long: Nucleoside triphosphatase I (631 aa).

A Helicase ATP-binding domain is found at 42–204 (FLGLDSMHSL…TMLVNLLRPG (163 aa)). 55–62 (HETGVGKT) provides a ligand contact to ATP. A DEXH box motif is present at residues 141 to 144 (DECH). A Helicase C-terminal domain is found at 367-532 (KFIDVCLGIL…EFVQLFRVFK (166 aa)). Positions 457-524 (DIFILDMTWN…EIIQSKSKEF (68 aa)) are binding to the cap-specific mRNA (nucleoside-2'-O-)-methyltransferase.

This sequence belongs to the helicase family. NPH I subfamily. As to quaternary structure, monomer. Interacts (via C-terminus) with RAP94/OPG109 (via N-terminus). Interacts with the cap-specific mRNA (nucleoside-2'-O-)-methyltransferase OPG102.

It localises to the virion. The enzyme catalyses a ribonucleoside 5'-triphosphate + H2O = a ribonucleoside 5'-diphosphate + phosphate + H(+). In terms of biological role, DNA-dependent ATPase that acts as a 5' to 3' translocase on single-stranded DNA and thereby plays a role in transcription termination of viral early genes. Uses forward translocation in concert with the viral RNA polymerase RAP94/OPG109 subunit and the capping enzyme/VTF to catalyze release of UUUUUNU-containing nascent RNA from the elongation complex. In addition, acts as a positive elongation factor to assist transcription through problematic sequences. The chain is Nucleoside triphosphatase I (OPG123) from Vaccinia virus (strain Copenhagen) (VACV).